We begin with the raw amino-acid sequence, 161 residues long: 3-isopropylmalate dehydratase small subunit (161 aa).

This sequence belongs to the LeuD family. LeuD type 2 subfamily. Heterodimer of LeuC and LeuD.

It catalyses the reaction (2R,3S)-3-isopropylmalate = (2S)-2-isopropylmalate. It participates in amino-acid biosynthesis; L-leucine biosynthesis; L-leucine from 3-methyl-2-oxobutanoate: step 2/4. In terms of biological role, catalyzes the isomerization between 2-isopropylmalate and 3-isopropylmalate, via the formation of 2-isopropylmaleate. The chain is 3-isopropylmalate dehydratase small subunit from Pyrobaculum islandicum (strain DSM 4184 / JCM 9189 / GEO3).